Here is a 182-residue protein sequence, read N- to C-terminus: RFKKIRRLGALPGLTNKRPRSGSDLKNQLRSGKRSQYRIRLEEKQKLRFHYGLTERQLLKYVHIAGKAKGSTGQVLLQLLEMRLDNILFRLGMASTIPGARQLVNHRHILVNGRIVDIPSYRCKPRDIITTKDKQRSKALIQNSIASSPHEELPNHLTIDPFQYKGLVNQIIDSKWIGLKIN.

One can recognise an S4 RNA-binding domain in the interval 82–143 (MRLDNILFRL…KQRSKALIQN (62 aa)).

It belongs to the universal ribosomal protein uS4 family. As to quaternary structure, part of the 30S ribosomal subunit. Contacts protein S5. The interaction surface between S4 and S5 is involved in control of translational fidelity.

The protein resides in the plastid. The protein localises to the chloroplast. In terms of biological role, one of the primary rRNA binding proteins, it binds directly to 16S rRNA where it nucleates assembly of the body of the 30S subunit. With S5 and S12 plays an important role in translational accuracy. This is Small ribosomal subunit protein uS4c (rps4) from Libertia formosa (Snowy mermaid).